The primary structure comprises 128 residues: ATP synthase epsilon chain (128 aa).

This sequence belongs to the ATPase epsilon chain family. As to quaternary structure, F-type ATPases have 2 components, CF(1) - the catalytic core - and CF(0) - the membrane proton channel. CF(1) has five subunits: alpha(3), beta(3), gamma(1), delta(1), epsilon(1). CF(0) has three main subunits: a, b and c.

It is found in the cell inner membrane. Produces ATP from ADP in the presence of a proton gradient across the membrane. This is ATP synthase epsilon chain from Sulfurovum sp. (strain NBC37-1).